The sequence spans 154 residues: Lipoprotein signal peptidase (154 aa).

2 helical membrane-spanning segments follow: residues 55–75 (GHMW…IYIM) and 84–104 (LFSI…IDRI). Residues Asp-111 and Asp-129 contribute to the active site. Residues 124 to 144 (IFNVADAALSVGVVLMLVYVF) traverse the membrane as a helical segment.

Belongs to the peptidase A8 family.

The protein localises to the cell membrane. It carries out the reaction Release of signal peptides from bacterial membrane prolipoproteins. Hydrolyzes -Xaa-Yaa-Zaa-|-(S,diacylglyceryl)Cys-, in which Xaa is hydrophobic (preferably Leu), and Yaa (Ala or Ser) and Zaa (Gly or Ala) have small, neutral side chains.. Its pathway is protein modification; lipoprotein biosynthesis (signal peptide cleavage). This protein specifically catalyzes the removal of signal peptides from prolipoproteins. The polypeptide is Lipoprotein signal peptidase (Listeria innocua serovar 6a (strain ATCC BAA-680 / CLIP 11262)).